Consider the following 276-residue polypeptide: NAC domain-containing protein 67 (276 aa).

The region spanning 17–170 (LPPGFRFHPT…DWVLCRLYNK (154 aa)) is the NAC domain.

As to expression, expressed in leaf blades.

The protein resides in the nucleus. Its function is as follows. Probable transcription factor involved in stress response. The polypeptide is NAC domain-containing protein 67 (Oryza sativa subsp. japonica (Rice)).